The sequence spans 162 residues: Epoxidase pydX (162 aa).

Positions 1 to 26 (MSLIALPLRLLRLLPAITSTWVLAFA) are cleaved as a signal peptide. Helical transmembrane passes span 62-82 (WILI…LFVG) and 89-109 (TGAM…MGYM). N-linked (GlcNAc...) asparagine glycans are attached at residues Asn-127 and Asn-139.

Belongs to the epoxidase xenD family.

It localises to the membrane. The protein operates within mycotoxin biosynthesis. Its function is as follows. Epoxidase; part of the gene cluster that mediates the biosynthesis of pyrrocidines, fungal natural products containing a macrocyclic para-cyclophane connected to a decahydrofluorene ring system that show potent antibiotic activities toward Gram-negative bacteria. Within the pathway, pydX functions synergistically with pydB, pydE and pydZ to form the cyclophane. The pathway begins with the PKS-NRPS pydA which, with the help of the trans-enoyl reductase pydC, synthesizes the polyketide-tyrosyl acyl thioester product which can be reductively off-loaded by the terminal reductase (R) domain in pydA. The alpha/beta hydrolase pydG is then required to catalyze the subsequent Knoevenagel condensation that affords the 3-pyrrolin-2-one ring, whereas the four proteins pydB, pydE, pydX and pydZ then function synergistically to form the cyclophane. PydB and the membrane-bound pydX and pydZ are lipid-binding proteins that can sequester and mold the pdyG product into the inverse S-shape. Binding of the medium chain reductase pydE to the complex would trigger the cascade oxidative cyclization. PydY is involved in the Diels-Alder cycloaddition that forms the decahydrofluorene core. Additional non-enzymatic hydroxylation yields pyrrocidine A2 which can be further reduced into pyrrocidine B by an endogenous reductase. The polypeptide is Epoxidase pydX (Acremonium sp).